Reading from the N-terminus, the 402-residue chain is UPF0261 protein BPP1817 (402 aa).

This sequence belongs to the UPF0261 family.

This Bordetella parapertussis (strain 12822 / ATCC BAA-587 / NCTC 13253) protein is UPF0261 protein BPP1817.